The primary structure comprises 138 residues: Ribulose bisphosphate carboxylase small subunit (138 aa).

Belongs to the RuBisCO small chain family. As to quaternary structure, heterohexadecamer of 8 large and 8 small subunits.

It is found in the plastid. It localises to the chloroplast. RuBisCO catalyzes two reactions: the carboxylation of D-ribulose 1,5-bisphosphate, the primary event in carbon dioxide fixation, as well as the oxidative fragmentation of the pentose substrate in the photorespiration process. Both reactions occur simultaneously and in competition at the same active site. Although the small subunit is not catalytic it is essential for maximal activity. The chain is Ribulose bisphosphate carboxylase small subunit from Antithamnion sp. (Red alga).